We begin with the raw amino-acid sequence, 390 residues long: NADH-dependent butanol dehydrogenase B (390 aa).

Belongs to the iron-containing alcohol dehydrogenase family. In terms of assembly, homodimer.

Its pathway is alcohol metabolism; butanol biosynthesis. The protein is NADH-dependent butanol dehydrogenase B (bdhB) of Clostridium acetobutylicum (strain ATCC 824 / DSM 792 / JCM 1419 / IAM 19013 / LMG 5710 / NBRC 13948 / NRRL B-527 / VKM B-1787 / 2291 / W).